Here is a 462-residue protein sequence, read N- to C-terminus: MNWTVDIPIDQLPSLPPLPTDLRTRLDAALAKPAAQQPTWPADQALAMRTVLESVPPVTVPSEIVRLQEQLAQVAKGEAFLLQGGDCAETFMDNTEPHIRGNVRALLQMAVVLTYGASMPVVKVARIAGQYAKPRSADIDALGLRSYRGDMINGFAPDAAAREHDPSRLVRAYANASAAMNLVRALTSSGLASLHLVHDWNREFVRTSPAGARYEALATEIDRGLRFMSACGVADRNLQTAEIYASHEALVLDYERAMLRLSDGDDGEPQLFDLSAHTVWIGERTRQIDGAHIAFAQVIANPVGVKLGPNMTPELAVEYVERLDPHNKPGRLTLVSRMGNHKVRDLLPPIVEKVQATGHQVIWQCDPMHGNTHESSTGFKTRHFDRIVDEVQGFFEVHRALGTHPGGIHVEITGENVTECLGGAQDISETDLAGRYETACDPRLNTQQSLELAFLVAEMLRD.

A Mn(2+)-binding site is contributed by Cys-87. Phosphoenolpyruvate contacts are provided by residues Arg-126, 283–284 (ER), Lys-306, and Arg-337. 3 residues coordinate Mn(2+): His-369, Glu-411, and Asp-441.

In terms of assembly, homodimer. Interacts with Rv0948c. The cofactor is Mn(2+). Requires Co(2+) as cofactor. It depends on Cd(2+) as a cofactor.

It carries out the reaction D-erythrose 4-phosphate + phosphoenolpyruvate + H2O = 7-phospho-2-dehydro-3-deoxy-D-arabino-heptonate + phosphate. Its pathway is metabolic intermediate biosynthesis; chorismate biosynthesis; chorismate from D-erythrose 4-phosphate and phosphoenolpyruvate: step 1/7. Its activity is regulated as follows. Feedback inhibited by tryptophan, tyrosine, phenylalanine and chorismate. Catalyzes an aldol-like condensation reaction between phosphoenolpyruvate (PEP) and D-erythrose 4-phosphate (E4P) to generate 3-deoxy-D-arabino-heptulosonate 7-phosphate (DAH7P) and inorganic phosphate. This is Phospho-2-dehydro-3-deoxyheptonate aldolase AroG (aroG) from Mycobacterium tuberculosis (strain ATCC 25618 / H37Rv).